The following is a 313-amino-acid chain: Protein MFI (313 aa).

As to quaternary structure, can homodimerize. Interacts with MFF; the interaction inhibits MFF interaction with DNM1L. Enriched in the pancreatic beta cell and the testis and is expressed at low levels in other tissues tested.

The protein localises to the cytoplasm. It localises to the cytosol. It is found in the mitochondrion outer membrane. In terms of biological role, acts as an inhibitor of mitochondrial fission. Interacts with MFF and prevents DNM1L recruitment to mitochondria, promoting a more fused mitochondrial network. This is Protein MFI from Homo sapiens (Human).